Reading from the N-terminus, the 534-residue chain is Glycerophosphodiester transporter GIT2 (534 aa).

12 helical membrane-spanning segments follow: residues 63 to 83, 96 to 116, 135 to 155, 163 to 183, 202 to 222, 230 to 250, 289 to 309, 322 to 342, 350 to 370, 377 to 397, 417 to 437, and 453 to 473; these read GAGLFADGYVNNSIGIVMACL, AISNIGSIGFVGTVVGQLSFG, LIAFTLLCAVGSWGTTIQGFF, FCLGVAIGAEYPTSSVIASEF, FMIDFGFVVSAFVPFVLLWIF, LWRVSIGLGAILPTALFFIRL, MIWFIYNFSVYSFGTFNAIIL, WGWSVVFNLFYIPGSFLGAFS, LTLAIGVGLQGIIGFIMSACL, VAAFTVVFGIFATLGEFGPGG, GIAAAMGKIGAFVGTWIFPAI, and VPFYLSSGLCIFSALLTFFLC.

It belongs to the major facilitator superfamily. Sugar transporter (TC 2.A.1.1) family.

It localises to the cell membrane. In terms of biological role, probable glycerophosphodiester transporter. Does not possess detectable glycerophosphoinositol (GroPIns) transport activity. Might be involved in the uptake of glycerophosphocholine (GroPCho). The expanded ability to utilize GroPIns and GroPCho results from the organism's pathogenic nature and its need to occupy a variety of environments within its host organism. This possibility is buttressed by the fact that GroPIns and GroPCho are present and abundant in human fluids. The polypeptide is Glycerophosphodiester transporter GIT2 (Candida albicans (strain SC5314 / ATCC MYA-2876) (Yeast)).